Consider the following 351-residue polypeptide: MAATTYMPAEMELGNIGGYHAASPRSAEPADMKYQHPLHSGGSPSPGAPVIGNPWTSLPPADPWAMHQHHAHAHQPDVKPPPAPHDHRHLQHAAHGWHAPVVSPHYGAARPSHCMEDTQCPCTNTICSETSSPRDPLHHHAMERDQPEEDTPTSDDLEAFAKQFKQRRIKLGFTQADVGLALGTLYGNVFSQTTICRFEALQLSFKNMCKLKPLLQKWLEEADSTTGSPTSIDKIAAQGRKRKKRTSIEVSVKGALEQHFHKQPKPSAQEITSLADSLQLEKEVVRVWFCNRRQKEKRMTPPNTLGGEMMEGMGHAHYGHGDVHGSPLQHSPPGLSPQHGLPQGAHTLAAH.

2 disordered regions span residues 61 to 88 (ADPW…HDHR) and 131 to 154 (SSPR…TPTS). The segment covering 135-145 (DPLHHHAMERD) has biased composition (basic and acidic residues). One can recognise a POU-specific domain in the interval 149–223 (EDTPTSDDLE…LLQKWLEEAD (75 aa)). A DNA-binding region (homeobox) is located at residues 241-300 (KRKKRTSIEVSVKGALEQHFHKQPKPSAQEITSLADSLQLEKEVVRVWFCNRRQKEKRMT). The interval 314–351 (GHAHYGHGDVHGSPLQHSPPGLSPQHGLPQGAHTLAAH) is disordered.

The protein belongs to the POU transcription factor family. Class-3 subfamily. As to expression, restricted to the middle silk gland.

Its subcellular location is the nucleus. Involved in the transcriptional regulation of sericin-1 gene. The protein is Silk gland factor 3 (SGF3) of Bombyx mori (Silk moth).